Consider the following 659-residue polypeptide: MFSQNMLIRDGEYTKSIYTMIKEERFQEAINVLNGIPEVSTTRAGLSLLGHCYYQTQDFIEASNCYEYLVNLVPDVPEYKLYYAQSLFQAGLFEEAHKISTTLDAPQLKDKVLQLQSAIAYGNEDYSTAQSLLLQRQDTSQEATVKNDEGCLLFQANMFEDALQRYVSALQAGGFNPHIAYNAALCHYRKKENSQALNYIAEIVERGIRNHPELGVGAQAETEGGARSVGNPPALAASGLAQAFNLKAAIEYQEGNVEGSREALTDLPPRLEPELDPVTLHNMALTDPVGGGAGLRRLAFLLELGPPTCPPETFANLLLLCCKHEMYDTAADILAEHTHLTYKYLSPYMYDLLDALITAQSTPEEAEQKLGVLANNIGGRLRSLAAKVQECRSAPDQNALRVALREYEFALESYLPVAMARAWIPWRADDFQGAEREFRASAEFCSETPTWRLHAAHVLFMRGDRYKEAAAFYEPIVRQNYDDILAVSASVLANLCVAYIMTSQNEEAEELMRKVERAEERKGNANGQCLHLCIVNLVIGTLYCAKGNYEFGLSRIAHALDGGSGARLCADTWLHVKRCVLGLLTGLSKQTIVLPSIAIQETLSFLRTCEAYGLTIPSVLTGPLEETGEQPPTIGLEARKLRALLLRLMEYNNFVSNTW.

TPR repeat units lie at residues 3-36 (SQNMLIRDGEYTKSIYTMIKEERFQEAINVLNGI), 43-76 (RAGLSLLGHCYYQTQDFIEASNCYEYLVNLVPDV), 143-176 (ATVKNDEGCLLFQANMFEDALQRYVSALQAGGFN), 178-210 (HIAYNAALCHYRKKENSQALNYIAEIVERGIRN), 391-424 (CRSAPDQNALRVALREYEFALESYLPVAMARAWI), 450-483 (TWRLHAAHVLFMRGDRYKEAAAFYEPIVRQNYDD), and 533-566 (CIVNLVIGTLYCAKGNYEFGLSRIAHALDGGSGA).

It belongs to the TTC30/dfy-1/fleer family.

It is found in the cell projection. The protein localises to the cilium. Required for polyglutamylation of axonemal tubulin in sensory cilia. Plays a role in anterograde intraflagellar transport (IFT), the process by which cilia precursors are transported from the base of the cilium to the site of their incorporation at the tip. This chain is Tetratricopeptide repeat protein 30 homolog, found in Aedes aegypti (Yellowfever mosquito).